Reading from the N-terminus, the 330-residue chain is Fructose-1,6-bisphosphatase class 1 (330 aa).

Residues Glu-84, Asp-103, Leu-105, and Asp-106 each contribute to the Mg(2+) site. Residues 106 to 109 (DGSS), Asn-196, and Lys-262 contribute to the substrate site. Position 268 (Glu-268) interacts with Mg(2+).

It belongs to the FBPase class 1 family. As to quaternary structure, homotetramer. It depends on Mg(2+) as a cofactor.

Its subcellular location is the cytoplasm. The enzyme catalyses beta-D-fructose 1,6-bisphosphate + H2O = beta-D-fructose 6-phosphate + phosphate. The protein operates within carbohydrate biosynthesis; gluconeogenesis. The protein is Fructose-1,6-bisphosphatase class 1 of Shewanella baltica (strain OS185).